The chain runs to 118 residues: Small ribosomal subunit protein uS13 (118 aa).

A disordered region spans residues serine 94 to lysine 118.

It belongs to the universal ribosomal protein uS13 family. In terms of assembly, part of the 30S ribosomal subunit. Forms a loose heterodimer with protein S19. Forms two bridges to the 50S subunit in the 70S ribosome.

Functionally, located at the top of the head of the 30S subunit, it contacts several helices of the 16S rRNA. In the 70S ribosome it contacts the 23S rRNA (bridge B1a) and protein L5 of the 50S subunit (bridge B1b), connecting the 2 subunits; these bridges are implicated in subunit movement. Contacts the tRNAs in the A and P-sites. This is Small ribosomal subunit protein uS13 from Colwellia psychrerythraea (strain 34H / ATCC BAA-681) (Vibrio psychroerythus).